Here is a 271-residue protein sequence, read N- to C-terminus: NADH-quinone oxidoreductase subunit B (271 aa).

[4Fe-4S] cluster is bound by residues cysteine 37, cysteine 38, cysteine 103, and cysteine 132. A disordered region spans residues 227–271; that stretch reads LAPPSVFGRAKRIPVDPKPSDEARAHGPGPTTESIGDVDGPDRGI. The segment covering 239 to 251 has biased composition (basic and acidic residues); that stretch reads IPVDPKPSDEARA.

It belongs to the complex I 20 kDa subunit family. As to quaternary structure, NDH-1 is composed of 14 different subunits. Subunits NuoB, C, D, E, F, and G constitute the peripheral sector of the complex. [4Fe-4S] cluster serves as cofactor.

Its subcellular location is the cell membrane. The catalysed reaction is a quinone + NADH + 5 H(+)(in) = a quinol + NAD(+) + 4 H(+)(out). Its function is as follows. NDH-1 shuttles electrons from NADH, via FMN and iron-sulfur (Fe-S) centers, to quinones in the respiratory chain. The immediate electron acceptor for the enzyme in this species is believed to be a menaquinone. Couples the redox reaction to proton translocation (for every two electrons transferred, four hydrogen ions are translocated across the cytoplasmic membrane), and thus conserves the redox energy in a proton gradient. In Frankia casuarinae (strain DSM 45818 / CECT 9043 / HFP020203 / CcI3), this protein is NADH-quinone oxidoreductase subunit B.